The chain runs to 239 residues: Proteasome activator complex subunit 2 (239 aa).

Alanine 2 carries the post-translational modification N-acetylalanine. A Phosphoserine modification is found at serine 10. A disordered region spans residues 65-87; the sequence is DIPIPDPPPKDDEMETDKQEKKE. The segment covering 72–87 has biased composition (basic and acidic residues); sequence PPKDDEMETDKQEKKE.

It belongs to the PA28 family. Heterodimer of PSME1 and PSME2, which forms a hexameric ring.

Implicated in immunoproteasome assembly and required for efficient antigen processing. The PA28 activator complex enhances the generation of class I binding peptides by altering the cleavage pattern of the proteasome. The chain is Proteasome activator complex subunit 2 (Psme2) from Mus musculus (Mouse).